The chain runs to 142 residues: MNSKSAQKIIDSIKQILTIYNIDFDPSFGSSLSSDSDADYEYLITKTQEKIQELDKRAQEILTQTGMSKEQMEVFANNPDNFSPEEWLALEKVRSSCDEYRKETENLINEITLDLHPTKESKRPKQKLSSTKKNKKKNWIPL.

The segment at 115–142 (LHPTKESKRPKQKLSSTKKNKKKNWIPL) is disordered. Residues 124 to 142 (PKQKLSSTKKNKKKNWIPL) show a composition bias toward basic residues.

Belongs to the chlamydial CPn_0742/CT_635/TC_0003 family.

The polypeptide is Protein CPn_0742/CP_0003/CPj0742/CpB0770 (Chlamydia pneumoniae (Chlamydophila pneumoniae)).